The primary structure comprises 81 residues: Small ribosomal subunit protein bS18 (81 aa).

It belongs to the bacterial ribosomal protein bS18 family. In terms of assembly, part of the 30S ribosomal subunit. Forms a tight heterodimer with protein bS6.

In terms of biological role, binds as a heterodimer with protein bS6 to the central domain of the 16S rRNA, where it helps stabilize the platform of the 30S subunit. The sequence is that of Small ribosomal subunit protein bS18 from Parvibaculum lavamentivorans (strain DS-1 / DSM 13023 / NCIMB 13966).